The sequence spans 347 residues: GMP reductase (347 aa).

108-131 (ADFEKTKQILDLNPALNFVCIDVA) is an NADP(+) binding site. Residues glycine 181 and glycine 183 each contribute to the K(+) site. The active-site Thioimidate intermediate is the cysteine 186. An NADP(+)-binding site is contributed by 216 to 239 (IVSDGGCTTPGDVAKAFGGGADFV).

The protein belongs to the IMPDH/GMPR family. GuaC type 1 subfamily. Homotetramer.

The catalysed reaction is IMP + NH4(+) + NADP(+) = GMP + NADPH + 2 H(+). Functionally, catalyzes the irreversible NADPH-dependent deamination of GMP to IMP. It functions in the conversion of nucleobase, nucleoside and nucleotide derivatives of G to A nucleotides, and in maintaining the intracellular balance of A and G nucleotides. In Shigella flexneri serotype 5b (strain 8401), this protein is GMP reductase.